Reading from the N-terminus, the 886-residue chain is Vam6/Vps39-like protein (886 aa).

Residues 15 to 294 form the CNH domain; sequence PLQIDCLAAW…RFITSGGSNI (280 aa). A CHCR repeat occupies 573–750; the sequence is FTEDLPEVES…LLRMYLSPPS (178 aa).

Belongs to the VAM6/VPS39 family. Homooligomer. Interacts with TGFBR2 and, less efficiently, with TGFBR1; interaction with TGFBR2 is independent of the receptor kinase activity and of the presence of TGF-beta. Also interacts with ACVR2B, but not with BMPR2. Interacts with SMAD4, preferentially following TGF-beta treatment. Does not interact with SAMD2 or SMAD3. Component of the homotypic fusion and vacuole protein sorting (HOPS) complex; the core of which composed of the class C Vps proteins VPS11, VPS16, VPS18 and VPS33A, is associated with VPS39 and VPS41. Interacts with PLEKHM2; involved in VPS39 recruitment to ARL8B-containing lysosomes. Associates with adapter protein complex 3 (AP-3) and clathrin:AP-3 complexes. Interacts with STX17; this interaction is increased in the absence of TMEM39A. Interacts with RAB7, RAB2A and RAB2B. Interacts with RAB2A (GTP-bound); the interaction contributes to obtaining a functional HOPS complex that promotes autophagosome-lysosome membrane fusion driven by STX17-SNAP29-VAMP8. Interacts with RAB39A (GTP-bound) and RAB39B (GTP-bound); interaction with RAB39A contributes to obtaining a functional HOPS complex. As to quaternary structure, (Microbial infection) Interacts with SARS coronavirus-2/SARS-CoV-2 ORF3A protein; the interaction is direct and sequestrates VPS39, thereby preventing HOPS complex from interacting with the autophagosomal SNARE protein STX17. ORF3A enhances the interaction of VPS39 with VPS11 and VPS18, while its interaction with the VPS16:VPS33A module is attenuated. In terms of tissue distribution, widely expressed, with highest levels in heart, skeletal muscle, kidney, pancreas, brain, placenta and spleen.

It is found in the cytoplasm. The protein localises to the lysosome membrane. It localises to the late endosome membrane. In terms of biological role, regulator of TGF-beta/activin signaling, inhibiting SMAD3- and activating SMAD2-dependent transcription. Acts by interfering with SMAD3/SMAD4 complex formation, this would lead to inhibition of SMAD3-dependent transcription and relieve SMAD3 inhibition of SMAD2-dependent promoters, thus increasing SMAD2-dependent transcription. Does not affect TGF-beta-induced SMAD2 or SMAD3 phosphorylation, nor SMAD2/SMAD4 complex formation. Plays a role in vesicle-mediated protein trafficking to lysosomal compartments including the endocytic membrane transport and autophagic pathways. Acts as a component of the HOPS endosomal tethering complex. This complex is proposed to be involved in the Rab5-to-Rab7 endosome conversion probably implicating MON1A/B, and via binding SNAREs and SNARE complexes to mediate tethering and docking events during SNARE-mediated membrane fusion. The HOPS complex is proposed to be recruited to Rab7 on the late endosomal membrane and to regulate late endocytic, phagocytic and autophagic traffic towards lysosomes. Involved in homotypic vesicle fusions between late endosomes and in heterotypic fusions between late endosomes and lysosomes. Required for fusion of endosomes and autophagosomes with lysosomes. This Homo sapiens (Human) protein is Vam6/Vps39-like protein.